We begin with the raw amino-acid sequence, 418 residues long: ATP phosphoribosyltransferase regulatory subunit (418 aa).

The protein belongs to the class-II aminoacyl-tRNA synthetase family. HisZ subfamily. In terms of assembly, heteromultimer composed of HisG and HisZ subunits.

The protein localises to the cytoplasm. Its pathway is amino-acid biosynthesis; L-histidine biosynthesis; L-histidine from 5-phospho-alpha-D-ribose 1-diphosphate: step 1/9. Functionally, required for the first step of histidine biosynthesis. May allow the feedback regulation of ATP phosphoribosyltransferase activity by histidine. This is ATP phosphoribosyltransferase regulatory subunit from Acetivibrio thermocellus (strain ATCC 27405 / DSM 1237 / JCM 9322 / NBRC 103400 / NCIMB 10682 / NRRL B-4536 / VPI 7372) (Clostridium thermocellum).